A 417-amino-acid polypeptide reads, in one-letter code: Serine hydroxymethyltransferase (417 aa).

Residues Leu121 and 125–127 (GHL) each bind (6S)-5,6,7,8-tetrahydrofolate. At Lys230 the chain carries N6-(pyridoxal phosphate)lysine. 355-357 (SPF) serves as a coordination point for (6S)-5,6,7,8-tetrahydrofolate.

This sequence belongs to the SHMT family. In terms of assembly, homodimer. Pyridoxal 5'-phosphate serves as cofactor.

It localises to the cytoplasm. It catalyses the reaction (6R)-5,10-methylene-5,6,7,8-tetrahydrofolate + glycine + H2O = (6S)-5,6,7,8-tetrahydrofolate + L-serine. It functions in the pathway one-carbon metabolism; tetrahydrofolate interconversion. It participates in amino-acid biosynthesis; glycine biosynthesis; glycine from L-serine: step 1/1. Its function is as follows. Catalyzes the reversible interconversion of serine and glycine with tetrahydrofolate (THF) serving as the one-carbon carrier. This reaction serves as the major source of one-carbon groups required for the biosynthesis of purines, thymidylate, methionine, and other important biomolecules. Also exhibits THF-independent aldolase activity toward beta-hydroxyamino acids, producing glycine and aldehydes, via a retro-aldol mechanism. The chain is Serine hydroxymethyltransferase from Nitrosococcus oceani (strain ATCC 19707 / BCRC 17464 / JCM 30415 / NCIMB 11848 / C-107).